Reading from the N-terminus, the 275-residue chain is MRVGAHVSIAGGVDNAVTNELDVGGNCGQIFTHSPQVWQDPNIGADEAAAFREGTAADLDGPWVIHSSYLVNLCTPKDDLRAKSIDSMQAEVDAAHTLGIPYVNVHLGAHTGAGVDDGLDNAASALDELDIPDDVTVLIESDAGSGTKLGGDFEHLHEVLTRSDQDLDVCIDTAHAFAAGYDLSTEAAVNDTLAAFDDVVGLDHLQYVHLNDSKHACGTNKDEHAHIGEGHIGEAGMRAFINHDAIADVPLVLETPHEDGRGFAWNIDRVRDLRA.

9 residues coordinate Zn(2+): His66, His106, Glu140, Asp172, His175, His209, Asp222, His224, and Glu254.

Belongs to the AP endonuclease 2 family. It depends on Zn(2+) as a cofactor.

It catalyses the reaction Endonucleolytic cleavage to 5'-phosphooligonucleotide end-products.. Functionally, endonuclease IV plays a role in DNA repair. It cleaves phosphodiester bonds at apurinic or apyrimidinic (AP) sites, generating a 3'-hydroxyl group and a 5'-terminal sugar phosphate. This Halobacterium salinarum (strain ATCC 29341 / DSM 671 / R1) protein is Probable endonuclease 4.